A 170-amino-acid polypeptide reads, in one-letter code: Adenine phosphoribosyltransferase (170 aa).

This sequence belongs to the purine/pyrimidine phosphoribosyltransferase family. Homodimer.

It localises to the cytoplasm. The catalysed reaction is AMP + diphosphate = 5-phospho-alpha-D-ribose 1-diphosphate + adenine. Its pathway is purine metabolism; AMP biosynthesis via salvage pathway; AMP from adenine: step 1/1. Functionally, catalyzes a salvage reaction resulting in the formation of AMP, that is energically less costly than de novo synthesis. The chain is Adenine phosphoribosyltransferase from Nitrosopumilus maritimus (strain SCM1).